Here is a 425-residue protein sequence, read N- to C-terminus: D-tagatose 6-phosphate 4-epimerase (425 aa).

It belongs to the GatZ/KbaZ family.

The enzyme catalyses keto-D-tagatose 6-phosphate = keto-D-fructose 6-phosphate. The protein operates within carbohydrate metabolism. Involved in galactitol and D-altritol catabolism. Catalyzes the epimerization of D-tagatose 6-phosphate to D-fructose 6-phosphate. The protein is D-tagatose 6-phosphate 4-epimerase of Agrobacterium fabrum (strain C58 / ATCC 33970) (Agrobacterium tumefaciens (strain C58)).